The chain runs to 344 residues: Anthranilate phosphoribosyltransferase (344 aa).

5-phospho-alpha-D-ribose 1-diphosphate contacts are provided by residues Gly86, 89–90 (GD), Thr94, 96–99 (NIST), 114–122 (KHGNKSASG), and Ser126. Residue Gly86 participates in anthranilate binding. Ser98 contacts Mg(2+). Position 117 (Asn117) interacts with anthranilate. Residue Arg172 coordinates anthranilate. Mg(2+) contacts are provided by Asp231 and Glu232.

Belongs to the anthranilate phosphoribosyltransferase family. In terms of assembly, homodimer. Mg(2+) is required as a cofactor.

The catalysed reaction is N-(5-phospho-beta-D-ribosyl)anthranilate + diphosphate = 5-phospho-alpha-D-ribose 1-diphosphate + anthranilate. The protein operates within amino-acid biosynthesis; L-tryptophan biosynthesis; L-tryptophan from chorismate: step 2/5. Functionally, catalyzes the transfer of the phosphoribosyl group of 5-phosphorylribose-1-pyrophosphate (PRPP) to anthranilate to yield N-(5'-phosphoribosyl)-anthranilate (PRA). This Prochlorococcus marinus (strain MIT 9301) protein is Anthranilate phosphoribosyltransferase.